The sequence spans 262 residues: Thiazole synthase (262 aa).

K104 (schiff-base intermediate with DXP) is an active-site residue. 1-deoxy-D-xylulose 5-phosphate contacts are provided by residues G165, 191–192 (AG), and 213–214 (NT).

Belongs to the ThiG family. As to quaternary structure, homotetramer. Forms heterodimers with either ThiH or ThiS.

It is found in the cytoplasm. The catalysed reaction is [ThiS sulfur-carrier protein]-C-terminal-Gly-aminoethanethioate + 2-iminoacetate + 1-deoxy-D-xylulose 5-phosphate = [ThiS sulfur-carrier protein]-C-terminal Gly-Gly + 2-[(2R,5Z)-2-carboxy-4-methylthiazol-5(2H)-ylidene]ethyl phosphate + 2 H2O + H(+). The protein operates within cofactor biosynthesis; thiamine diphosphate biosynthesis. Catalyzes the rearrangement of 1-deoxy-D-xylulose 5-phosphate (DXP) to produce the thiazole phosphate moiety of thiamine. Sulfur is provided by the thiocarboxylate moiety of the carrier protein ThiS. In vitro, sulfur can be provided by H(2)S. This Nitrosococcus oceani (strain ATCC 19707 / BCRC 17464 / JCM 30415 / NCIMB 11848 / C-107) protein is Thiazole synthase.